The chain runs to 380 residues: Cytochrome b (380 aa).

Helical transmembrane passes span 34-54, 78-99, 114-134, and 179-199; these read FGSLLGICLATQILTGLLLAM, WLIRNLHANGASLFFICIYMHI, WNTGIILLLTLMATAFVGYVL, and FFALHFLLPFLIAGLTLIHLT. Heme b is bound by residues H84 and H98. Residues H183 and H197 each contribute to the heme b site. H202 provides a ligand contact to a ubiquinone. 4 helical membrane passes run 227–247, 289–309, 321–341, and 348–368; these read LKDILGFMLMYLPLMTLALFT, LGGVLALAASVLILFLSPLLH, LSQSLFWLLVTNLLILTWVGS, and FIIIGQLASLSYFTTLLILLP.

The protein belongs to the cytochrome b family. The cytochrome bc1 complex contains 11 subunits: 3 respiratory subunits (MT-CYB, CYC1 and UQCRFS1), 2 core proteins (UQCRC1 and UQCRC2) and 6 low-molecular weight proteins (UQCRH/QCR6, UQCRB/QCR7, UQCRQ/QCR8, UQCR10/QCR9, UQCR11/QCR10 and a cleavage product of UQCRFS1). This cytochrome bc1 complex then forms a dimer. The cofactor is heme b.

Its subcellular location is the mitochondrion inner membrane. Its function is as follows. Component of the ubiquinol-cytochrome c reductase complex (complex III or cytochrome b-c1 complex) that is part of the mitochondrial respiratory chain. The b-c1 complex mediates electron transfer from ubiquinol to cytochrome c. Contributes to the generation of a proton gradient across the mitochondrial membrane that is then used for ATP synthesis. This is Cytochrome b (MT-CYB) from Falco peregrinus (Peregrine falcon).